The chain runs to 262 residues: Phosphonates import ATP-binding protein PhnC (262 aa).

The region spanning 5–253 (IRVEKLAKTF…RFDHLYRSIN (249 aa)) is the ABC transporter domain. 37 to 44 (GPSGSGKS) is an ATP binding site.

Belongs to the ABC transporter superfamily. Phosphonates importer (TC 3.A.1.9.1) family. As to quaternary structure, the complex is composed of two ATP-binding proteins (PhnC), two transmembrane proteins (PhnE) and a solute-binding protein (PhnD).

The protein localises to the cell inner membrane. The enzyme catalyses phosphonate(out) + ATP + H2O = phosphonate(in) + ADP + phosphate + H(+). Part of the ABC transporter complex PhnCDE involved in phosphonates import. Responsible for energy coupling to the transport system. In Shigella flexneri serotype 5b (strain 8401), this protein is Phosphonates import ATP-binding protein PhnC.